Here is a 508-residue protein sequence, read N- to C-terminus: Pancreatic alpha-amylase (508 aa).

The N-terminal stretch at 1–15 (MKFVLLLSLIGFCWA) is a signal peptide. Gln-16 carries the post-translational modification Pyrrolidone carboxylic acid. 3 disulfides stabilise this stretch: Cys-43/Cys-101, Cys-85/Cys-130, and Cys-156/Cys-172. Residues Asn-115, Arg-170, and Asp-179 each contribute to the Ca(2+) site. Residue Arg-207 coordinates chloride. The active-site Nucleophile is Asp-209. A Ca(2+)-binding site is contributed by His-213. Catalysis depends on Glu-245, which acts as the Proton donor. Chloride is bound by residues Asn-310 and Arg-349. 2 disulfides stabilise this stretch: Cys-390–Cys-396 and Cys-462–Cys-474.

Belongs to the glycosyl hydrolase 13 family. As to quaternary structure, monomer. Ca(2+) serves as cofactor. Chloride is required as a cofactor.

The protein resides in the secreted. It localises to the extracellular space. It carries out the reaction Endohydrolysis of (1-&gt;4)-alpha-D-glucosidic linkages in polysaccharides containing three or more (1-&gt;4)-alpha-linked D-glucose units.. The protein is Pancreatic alpha-amylase (Amy2) of Rattus norvegicus (Rat).